Reading from the N-terminus, the 208-residue chain is Redox-sensing transcriptional repressor Rex (208 aa).

The segment at residues 16-55 (VYSRYLENLYRKGITTVSSADIAQGVGVTSAQVRKDLAYF) is a DNA-binding region (H-T-H motif). Position 90-95 (90-95 (GAGNLG)) interacts with NAD(+).

Belongs to the transcriptional regulatory Rex family. In terms of assembly, homodimer.

The protein localises to the cytoplasm. Functionally, modulates transcription in response to changes in cellular NADH/NAD(+) redox state. This chain is Redox-sensing transcriptional repressor Rex, found in Carboxydothermus hydrogenoformans (strain ATCC BAA-161 / DSM 6008 / Z-2901).